A 245-amino-acid polypeptide reads, in one-letter code: Probable transcriptional regulatory protein Ddes_0536 (245 aa).

The segment at 1-21 is disordered; sequence MAGHSKWANIQHRKGRQDAKR.

This sequence belongs to the TACO1 family.

It localises to the cytoplasm. In Desulfovibrio desulfuricans (strain ATCC 27774 / DSM 6949 / MB), this protein is Probable transcriptional regulatory protein Ddes_0536.